The chain runs to 566 residues: Serine/threonine-protein kinase PknE (566 aa).

Residues 1 to 337 are Cytoplasmic-facing; sequence MDGTAESREG…PLPRSARQPW (337 aa). Residue serine 7 is modified to Phosphoserine; by autocatalysis. Threonine 11 bears the Phosphothreonine; by autocatalysis mark. Residues 16 to 275 enclose the Protein kinase domain; sequence YRLRRLVGRG…DLSAAAHAAL (260 aa). Residues 22-30 and lysine 45 contribute to the ATP site; that span reads VGRGGMGDV. A phosphothreonine; by autocatalysis mark is found at threonine 50 and threonine 59. The active-site Proton acceptor is the aspartate 139. 3 positions are modified to phosphothreonine; by autocatalysis: threonine 170, threonine 175, and threonine 178. The disordered stretch occupies residues 296–330; that stretch reads PVPSTHPVSPGTRWPQPTPWAGGAPPWGPPSSPLP. The helical transmembrane segment at 338–358 threads the bilayer; the sequence is LWVGVAVAVVVALAGGLGIAL. Over 359-566 the chain is Extracellular; it reads AHPWRSSGPR…DPSWLARLIG (208 aa).

This sequence belongs to the protein kinase superfamily. Ser/Thr protein kinase family. As to quaternary structure, homodimer. Post-translationally, autophosphorylated on serine and threonine residues. Dephosphorylated by PstP.

Its subcellular location is the cell membrane. The enzyme catalyses L-seryl-[protein] + ATP = O-phospho-L-seryl-[protein] + ADP + H(+). It catalyses the reaction L-threonyl-[protein] + ATP = O-phospho-L-threonyl-[protein] + ADP + H(+). Its function is as follows. A serine/threonine-protein kinase, acts on HupB in vitro, modifying at least 2 Ser and 8 Thr residues. Important for bacterial survival in the host during infection. In Mycobacterium tuberculosis (strain ATCC 25177 / H37Ra), this protein is Serine/threonine-protein kinase PknE.